The following is a 349-amino-acid chain: Isopentenyl-diphosphate delta-isomerase (349 aa).

6–7 (RK) provides a ligand contact to substrate. FMN is bound by residues 62–64 (AMT), serine 93, and asparagine 122. Position 152 (glutamine 152) interacts with substrate. Glutamate 153 provides a ligand contact to Mg(2+). FMN is bound by residues lysine 184, threonine 214, 258–259 (GG), and 280–281 (AG).

Belongs to the IPP isomerase type 2 family. In terms of assembly, homooctamer. Dimer of tetramers. It depends on FMN as a cofactor. Requires NADPH as cofactor. The cofactor is Mg(2+).

The protein resides in the cytoplasm. The enzyme catalyses isopentenyl diphosphate = dimethylallyl diphosphate. Involved in the biosynthesis of isoprenoids. Catalyzes the 1,3-allylic rearrangement of the homoallylic substrate isopentenyl (IPP) to its allylic isomer, dimethylallyl diphosphate (DMAPP). The polypeptide is Isopentenyl-diphosphate delta-isomerase (Bacillus cereus (strain AH187)).